The following is a 181-amino-acid chain: Probable N-acetyltransferase YjcK (181 aa).

The N-acetyltransferase domain occupies 7 to 172; it reads IYVRPLEVTD…NGVWEDHQVL (166 aa).

The protein belongs to the acetyltransferase family. RimJ subfamily.

The enzyme catalyses an N-terminal L-alpha-aminoacyl-[protein] + acetyl-CoA = N-terminal N(alpha)-acetyl-L-alpha-aminoacyl-[protein] + CoA + H(+). Probable N-terminal protein acetyltransferase. This Bacillus subtilis (strain 168) protein is Probable N-acetyltransferase YjcK (yjcK).